Reading from the N-terminus, the 418-residue chain is MNQFVIKGSNKLTGDVFISGSKNASLPILFATILSEEEIEIQNVPKIKDTDFAIKLLRYLGATVEENKSIYINAKNISIYHAPCNLVKTMRASIWALGPLLARFGEGSISLPGGCEIGNRPVDLHLYGLKKLGAKIYLKDGYVKANVKGRLHSARIVMNKISVGATLTIMSAATLAIGITIIENAAREPEIIDTANFLISLGAKINGVGTNTIFIKGVKKLKGGVYKILPDRIETGTFLVAAAISRGKITCYDTNPNTLNIVLKKLHESGARIEIGKDWIKLDMIDKRPKAVKIETSPYPGFPTDMQAQFTVLNLISYGSSIITENIFENRFMHISELIKMGGRAIIKNNNIFCYGVNQLFGAQVIAKDLRTAASLIIAGCIADGITTVDCLYHIDRGYCQIENKLKNIGANIKRLKK.

Residue 22 to 23 (KN) coordinates phosphoenolpyruvate. Position 91 (Arg91) interacts with UDP-N-acetyl-alpha-D-glucosamine. Residue Cys115 is the Proton donor of the active site. Cys115 carries the 2-(S-cysteinyl)pyruvic acid O-phosphothioketal modification. UDP-N-acetyl-alpha-D-glucosamine contacts are provided by residues 120-124 (RPVDL), Asp305, and Ile327.

It belongs to the EPSP synthase family. MurA subfamily.

The protein resides in the cytoplasm. It catalyses the reaction phosphoenolpyruvate + UDP-N-acetyl-alpha-D-glucosamine = UDP-N-acetyl-3-O-(1-carboxyvinyl)-alpha-D-glucosamine + phosphate. Its pathway is cell wall biogenesis; peptidoglycan biosynthesis. Cell wall formation. Adds enolpyruvyl to UDP-N-acetylglucosamine. This Wigglesworthia glossinidia brevipalpis protein is UDP-N-acetylglucosamine 1-carboxyvinyltransferase.